We begin with the raw amino-acid sequence, 585 residues long: Clathrin heavy chain linker domain-containing protein 1 (585 aa).

Residues 118–239 adopt a coiled-coil conformation; the sequence is QLEAKMRIID…DLRFRHQRLQ (122 aa).

This is Clathrin heavy chain linker domain-containing protein 1 (Clhc1) from Rattus norvegicus (Rat).